The primary structure comprises 260 residues: Pyridoxine 5'-phosphate synthase (260 aa).

3-amino-2-oxopropyl phosphate contacts are provided by asparagine 10 and arginine 21. Histidine 46 (proton acceptor) is an active-site residue. The 1-deoxy-D-xylulose 5-phosphate site is built by arginine 48 and histidine 53. The active-site Proton acceptor is the glutamate 76. Threonine 113 contacts 1-deoxy-D-xylulose 5-phosphate. Histidine 204 (proton donor) is an active-site residue. 3-amino-2-oxopropyl phosphate is bound by residues aspartate 205 and 227 to 228 (GH).

This sequence belongs to the PNP synthase family. As to quaternary structure, homooctamer; tetramer of dimers.

Its subcellular location is the cytoplasm. The enzyme catalyses 3-amino-2-oxopropyl phosphate + 1-deoxy-D-xylulose 5-phosphate = pyridoxine 5'-phosphate + phosphate + 2 H2O + H(+). It functions in the pathway cofactor biosynthesis; pyridoxine 5'-phosphate biosynthesis; pyridoxine 5'-phosphate from D-erythrose 4-phosphate: step 5/5. Catalyzes the complicated ring closure reaction between the two acyclic compounds 1-deoxy-D-xylulose-5-phosphate (DXP) and 3-amino-2-oxopropyl phosphate (1-amino-acetone-3-phosphate or AAP) to form pyridoxine 5'-phosphate (PNP) and inorganic phosphate. The sequence is that of Pyridoxine 5'-phosphate synthase from Xylella fastidiosa (strain M23).